The primary structure comprises 253 residues: Troponin T, fast skeletal muscle isoforms (253 aa).

A compositionally biased stretch (acidic residues) spans 1–25 (MSDTEEVEHGEEEYEEEEEVQEEEV). Disordered stretches follow at residues 1–58 (MSDT…DIQK) and 97–178 (RAER…VLAE). N-acetylserine is present on S2. Composition is skewed to basic and acidic residues over residues 46–58 (PEGE…DIQK), 97–139 (RAER…DDLK), and 167–178 (TARETKKKVLAE).

It belongs to the troponin T family.

In terms of biological role, troponin T is the tropomyosin-binding subunit of troponin, the thin filament regulatory complex which confers calcium-sensitivity to striated muscle actomyosin ATPase activity. The sequence is that of Troponin T, fast skeletal muscle isoforms (TNNT3) from Coturnix japonica (Japanese quail).